Consider the following 358-residue polypeptide: Alanine racemase (358 aa).

The active-site Proton acceptor; specific for D-alanine is lysine 35. Lysine 35 carries the N6-(pyridoxal phosphate)lysine modification. Substrate is bound at residue arginine 130. The Proton acceptor; specific for L-alanine role is filled by tyrosine 255. Methionine 303 provides a ligand contact to substrate.

This sequence belongs to the alanine racemase family. Pyridoxal 5'-phosphate is required as a cofactor.

The catalysed reaction is L-alanine = D-alanine. The protein operates within amino-acid biosynthesis; D-alanine biosynthesis; D-alanine from L-alanine: step 1/1. In terms of biological role, catalyzes the interconversion of L-alanine and D-alanine. May also act on other amino acids. The chain is Alanine racemase (alr) from Shewanella oneidensis (strain ATCC 700550 / JCM 31522 / CIP 106686 / LMG 19005 / NCIMB 14063 / MR-1).